We begin with the raw amino-acid sequence, 86 residues long: Mu-theraphotoxin-Hhn1c (86 aa).

A signal peptide spans 1 to 21 (MKASMFLALAGLALLFVVCYA). The propeptide occupies 22–49 (SESEEKEFSNELLSSVLAVDDNSKGEER). Disulfide bonds link Cys-51–Cys-66, Cys-58–Cys-73, and Cys-65–Cys-80. Ile-84 carries the post-translational modification Isoleucine amide.

The protein belongs to the neurotoxin 10 (Hwtx-1) family. 22 (Htx-4) subfamily. As to quaternary structure, monomer. As to expression, expressed by the venom gland.

It is found in the secreted. Its function is as follows. Neurotoxin. Selectively blocks neuronal tetrodotoxin-sensitive voltage-gated sodium channels (Nav). Does not affect tetrodotoxin-resistant voltage-gated sodium channels or calcium channels. The chain is Mu-theraphotoxin-Hhn1c from Cyriopagopus hainanus (Chinese bird spider).